The following is a 287-amino-acid chain: ATP synthase gamma chain (287 aa).

Belongs to the ATPase gamma chain family. In terms of assembly, F-type ATPases have 2 components, CF(1) - the catalytic core - and CF(0) - the membrane proton channel. CF(1) has five subunits: alpha(3), beta(3), gamma(1), delta(1), epsilon(1). CF(0) has three main subunits: a, b and c.

It is found in the cell membrane. In terms of biological role, produces ATP from ADP in the presence of a proton gradient across the membrane. The gamma chain is believed to be important in regulating ATPase activity and the flow of protons through the CF(0) complex. The sequence is that of ATP synthase gamma chain from Halothermothrix orenii (strain H 168 / OCM 544 / DSM 9562).